The following is a 671-amino-acid chain: DNA ligase (671 aa).

NAD(+) is bound by residues 36–40 (DHVYD), 85–86 (SM), and E115. K117 functions as the N6-AMP-lysine intermediate in the catalytic mechanism. The NAD(+) site is built by R138, E172, K287, and K311. Residues C405, C408, C423, and C428 each coordinate Zn(2+). In terms of domain architecture, BRCT spans 588–671 (AADNFFKGKT…SKIEEKDTEK (84 aa)).

It belongs to the NAD-dependent DNA ligase family. LigA subfamily. It depends on Mg(2+) as a cofactor. Requires Mn(2+) as cofactor.

It catalyses the reaction NAD(+) + (deoxyribonucleotide)n-3'-hydroxyl + 5'-phospho-(deoxyribonucleotide)m = (deoxyribonucleotide)n+m + AMP + beta-nicotinamide D-nucleotide.. DNA ligase that catalyzes the formation of phosphodiester linkages between 5'-phosphoryl and 3'-hydroxyl groups in double-stranded DNA using NAD as a coenzyme and as the energy source for the reaction. It is essential for DNA replication and repair of damaged DNA. The protein is DNA ligase of Lactobacillus delbrueckii subsp. bulgaricus (strain ATCC 11842 / DSM 20081 / BCRC 10696 / JCM 1002 / NBRC 13953 / NCIMB 11778 / NCTC 12712 / WDCM 00102 / Lb 14).